Here is an 826-residue protein sequence, read N- to C-terminus: Protein FAM171B (826 aa).

The signal sequence occupies residues 1–32 (MARLCRRVPCTLLLGLAVVLLKARLVPAAARA). The Extracellular portion of the chain corresponds to 33–353 (ELSRSDLSLI…DSKDITAYHT (321 aa)). The segment at 52-71 (QQQQQKQLEEAEEERTEVPG) is disordered. N-linked (GlcNAc...) asparagine glycans are attached at residues N108, N113, N213, and N268. A helical transmembrane segment spans residues 354–374 (VFLTAILGGTIVIVIGFFAVL). Residues 375–826 (LCYCRDKCGT…REERPLIPIN (452 aa)) are Cytoplasmic-facing. Disordered stretches follow at residues 429 to 448 (NAKNSSYSPQKKEPSKAETE), 474 to 493 (QNNYSRNPTQSLEPNVGSKQ), and 774 to 826 (HPGE…IPIN). Over residues 438–448 (QKKEPSKAETE) the composition is skewed to basic and acidic residues. The span at 474-486 (QNNYSRNPTQSLE) shows a compositional bias: polar residues. Positions 774 to 786 (HPGEESPGRKSTV) are enriched in basic and acidic residues. Position 794 is a phosphoserine (S794). The segment covering 805-826 (AKRDSKTNIWKKREERPLIPIN) has biased composition (basic and acidic residues).

The protein belongs to the FAM171 family.

It is found in the cytoplasmic granule. The protein localises to the membrane. The sequence is that of Protein FAM171B (FAM171B) from Homo sapiens (Human).